Reading from the N-terminus, the 60-residue chain is Large ribosomal subunit protein bL32 (60 aa).

The segment covering 1–23 (MAKHPVPKKKTSKSKRDMRRSHH) has biased composition (basic residues). The tract at residues 1-26 (MAKHPVPKKKTSKSKRDMRRSHHALV) is disordered.

This sequence belongs to the bacterial ribosomal protein bL32 family.

This chain is Large ribosomal subunit protein bL32, found in Deinococcus geothermalis (strain DSM 11300 / CIP 105573 / AG-3a).